Consider the following 217-residue polypeptide: Probable rhamnogalacturonan acetylesterase YesY (217 aa).

The active-site Nucleophile is the Ser11. Catalysis depends on residues Glu178 and His185.

The protein belongs to the 'GDSL' lipolytic enzyme family.

Its function is as follows. May play a role in the degradation of rhamnogalacturonan derived from plant cell walls. Probably has broad substrate specificity and may degrade several types of acetylated substrates. The polypeptide is Probable rhamnogalacturonan acetylesterase YesY (yesY) (Bacillus subtilis (strain 168)).